The primary structure comprises 228 residues: Tumor necrosis factor receptor superfamily member 18 (228 aa).

The N-terminal stretch at 1 to 19 is a signal peptide; the sequence is MGAWAMLYGVSMLCVLDLG. Over 20-153 the chain is Extracellular; it reads QPSVVEEPGC…EPLPTEQYGH (134 aa). TNFR-Cys repeat units lie at residues 28–61, 62–101, and 102–142; these read GCGPGKVQNGSGNNTRCCSLYAPGKEDCPKERCI, CVTPEYHCGDPQCKICKHYPCQPGQRVESQGDIVFGFRCV, and ACAM…AVCI. 5 cysteine pairs are disulfide-bonded: cysteine 29–cysteine 44, cysteine 62–cysteine 74, cysteine 69–cysteine 82, cysteine 103–cysteine 122, and cysteine 116–cysteine 141. 2 N-linked (GlcNAc...) asparagine glycosylation sites follow: asparagine 36 and asparagine 40. 2 N-linked (GlcNAc...) asparagine glycosylation sites follow: asparagine 121 and asparagine 134. Residues 154-174 traverse the membrane as a helical segment; sequence LTVIFLVMAACIFFLTTVQLG. The Cytoplasmic portion of the chain corresponds to 175–228; that stretch reads LHIWQLRRQHMCPRETQPFAEVQLSAEDACSFQFPEEERGEQTEEKCHLGGRWP.

As to quaternary structure, binds to TRAF1, TRAF2, and TRAF3, but not TRAF5 and TRAF6. Binds through its C-terminus to SIVA1/SIVA. Preferentially expressed in activated T lymphocytes.

Its subcellular location is the cell membrane. It localises to the secreted. Functionally, receptor for TNFSF18. Seems to be involved in interactions between activated T-lymphocytes and endothelial cells and in the regulation of T-cell receptor-mediated cell death. Mediated NF-kappa-B activation via the TRAF2/NIK pathway. In Mus musculus (Mouse), this protein is Tumor necrosis factor receptor superfamily member 18 (Tnfrsf18).